Here is a 444-residue protein sequence, read N- to C-terminus: Type VII secretion system protein EssB (444 aa).

Over 1 to 229 (MVKNHNPKNE…RKVGHTVFKW (229 aa)) the chain is Cytoplasmic. The helical transmembrane segment at 230–250 (VAIGMTTLSVLLIAFLAFLYF) threads the bilayer. Residues 251 to 444 (SVMKHNERIE…EKRQEAERKK (194 aa)) are Extracellular-facing. Positions 366-444 (KNNGDLSNDK…EKRQEAERKK (79 aa)) are disordered. Positions 372–444 (SNDKRSEETK…EKRQEAERKK (73 aa)) are enriched in basic and acidic residues. A coiled-coil region spans residues 387–443 (LQDILDKEKQVKDEKAKSEEEKAKAKDEKLKQQEENEKKQKEQAQKDKEKRQEAERK).

Belongs to the EssB family. May oligomerize and interact with other membrane components to form the Ess system. Interacts with EsaA.

The protein resides in the cell membrane. Functionally, component of the type VII secretion system (Ess). Required for the secretion of EsxA and proper accumulation of EssB and EssD. This is Type VII secretion system protein EssB from Staphylococcus aureus (strain USA300).